We begin with the raw amino-acid sequence, 312 residues long: Ornithine carbamoyltransferase (312 aa).

Residues 57–60, Gln-84, Arg-108, and 135–138 each bind carbamoyl phosphate; these read STRT and HPCQ. Residues Asn-166, Asp-226, and 230-231 contribute to the L-ornithine site; that span reads SM. Carbamoyl phosphate-binding positions include 265 to 266 and Arg-293; that span reads CL.

It belongs to the aspartate/ornithine carbamoyltransferase superfamily. OTCase family.

The protein resides in the cytoplasm. It catalyses the reaction carbamoyl phosphate + L-ornithine = L-citrulline + phosphate + H(+). Its pathway is amino-acid biosynthesis; L-arginine biosynthesis; L-arginine from L-ornithine and carbamoyl phosphate: step 1/3. Its function is as follows. Reversibly catalyzes the transfer of the carbamoyl group from carbamoyl phosphate (CP) to the N(epsilon) atom of ornithine (ORN) to produce L-citrulline. The chain is Ornithine carbamoyltransferase from Brucella ovis (strain ATCC 25840 / 63/290 / NCTC 10512).